The chain runs to 137 residues: Large ribosomal subunit protein uL16c (137 aa).

The segment at 1–21 (MLSPKKTKYRKQHRGRMKGKA) is disordered.

This sequence belongs to the universal ribosomal protein uL16 family. In terms of assembly, part of the 50S ribosomal subunit.

It localises to the plastid. The protein localises to the chloroplast. This chain is Large ribosomal subunit protein uL16c, found in Oedogonium cardiacum (Filamentous green alga).